Consider the following 79-residue polypeptide: Exodeoxyribonuclease 7 small subunit (79 aa).

This sequence belongs to the XseB family. Heterooligomer composed of large and small subunits.

The protein localises to the cytoplasm. The enzyme catalyses Exonucleolytic cleavage in either 5'- to 3'- or 3'- to 5'-direction to yield nucleoside 5'-phosphates.. In terms of biological role, bidirectionally degrades single-stranded DNA into large acid-insoluble oligonucleotides, which are then degraded further into small acid-soluble oligonucleotides. The polypeptide is Exodeoxyribonuclease 7 small subunit (Haemophilus influenzae (strain PittGG)).